Here is a 100-residue protein sequence, read N- to C-terminus: Osteocalcin (100 aa).

An N-terminal signal peptide occupies residues 1-23 (MRALTLLALLALAALCIAGQAGA). Positions 24 to 51 (KPSGAESSKGAAFVSKQEGSEVVKRPRR) are excised as a propeptide. Residues 52 to 98 (YLYQWLGAPVPYPDPLEPRREVCELNPDCDELADHIGFQEAYRRFYG) form the Gla domain. The Ca(2+) site is built by E68, E72, E75, and D81. E68 carries the post-translational modification 4-carboxyglutamate; partial. 4-carboxyglutamate is present on residues E72 and E75. C74 and C80 are joined by a disulfide.

Belongs to the osteocalcin/matrix Gla protein family. Post-translationally, gamma-carboxyglutamate residues are formed by vitamin K dependent carboxylation by GGCX. These residues are essential for the binding of calcium. Decarboxylation promotes the hormone activity.

The protein resides in the secreted. Its function is as follows. Bone protein that constitutes 1-2% of the total bone protein, and which acts as a negative regulator of bone formation. Functions to limit bone formation without impairing bone resorption or mineralization. It binds strongly to apatite and calcium. The uncarboxylated form acts as a hormone secreted by osteoblasts, which regulates different cellular processes, such as energy metabolism, male fertility and brain development. Regulates of energy metabolism by acting as a hormone favoring pancreatic beta-cell proliferation, insulin secretion and sensitivity and energy expenditure. Uncarboxylated osteocalcin hormone also promotes testosterone production in the testes: acts as a ligand for G protein-coupled receptor GPRC6A at the surface of Leydig cells, initiating a signaling response that promotes the expression of enzymes required for testosterone synthesis in a CREB-dependent manner. Also acts as a regulator of brain development: osteocalcin hormone crosses the blood-brain barrier and acts as a ligand for GPR158 on neurons, initiating a signaling response that prevents neuronal apoptosis in the hippocampus, favors the synthesis of all monoamine neurotransmitters and inhibits that of gamma-aminobutyric acid (GABA). Osteocalcin also crosses the placenta during pregnancy and maternal osteocalcin is required for fetal brain development. The polypeptide is Osteocalcin (BGLAP) (Homo sapiens (Human)).